Consider the following 369-residue polypeptide: Chorismate synthase (369 aa).

The NADP(+) site is built by arginine 48 and arginine 54. FMN contacts are provided by residues arginine 125–serine 127, asparagine 238–alanine 239, glycine 278, lysine 293–serine 297, and arginine 319.

This sequence belongs to the chorismate synthase family. As to quaternary structure, homotetramer. FMNH2 is required as a cofactor.

It catalyses the reaction 5-O-(1-carboxyvinyl)-3-phosphoshikimate = chorismate + phosphate. It participates in metabolic intermediate biosynthesis; chorismate biosynthesis; chorismate from D-erythrose 4-phosphate and phosphoenolpyruvate: step 7/7. In terms of biological role, catalyzes the anti-1,4-elimination of the C-3 phosphate and the C-6 proR hydrogen from 5-enolpyruvylshikimate-3-phosphate (EPSP) to yield chorismate, which is the branch point compound that serves as the starting substrate for the three terminal pathways of aromatic amino acid biosynthesis. This reaction introduces a second double bond into the aromatic ring system. The protein is Chorismate synthase of Cupriavidus necator (strain ATCC 17699 / DSM 428 / KCTC 22496 / NCIMB 10442 / H16 / Stanier 337) (Ralstonia eutropha).